Reading from the N-terminus, the 289-residue chain is Protease HtpX (289 aa).

Transmembrane regions (helical) follow at residues 5 to 25 (IVLF…VMSL) and 33 to 53 (MSGL…ISLL). Position 140 (histidine 140) interacts with Zn(2+). The active site involves glutamate 141. Histidine 144 contacts Zn(2+). Transmembrane regions (helical) follow at residues 155 to 175 (LLQG…GGFI) and 193 to 213 (GIVL…TMWF). Position 218 (glutamate 218) interacts with Zn(2+).

Belongs to the peptidase M48B family. It depends on Zn(2+) as a cofactor.

It is found in the cell inner membrane. The polypeptide is Protease HtpX (Xylella fastidiosa (strain M12)).